Reading from the N-terminus, the 163-residue chain is Putative pre-16S rRNA nuclease (163 aa).

It belongs to the YqgF nuclease family.

It localises to the cytoplasm. Its function is as follows. Could be a nuclease involved in processing of the 5'-end of pre-16S rRNA. This chain is Putative pre-16S rRNA nuclease, found in Nitrobacter hamburgensis (strain DSM 10229 / NCIMB 13809 / X14).